We begin with the raw amino-acid sequence, 155 residues long: Small ribosomal subunit protein uS9 (155 aa).

It belongs to the universal ribosomal protein uS9 family.

In Rhizobium meliloti (strain 1021) (Ensifer meliloti), this protein is Small ribosomal subunit protein uS9.